The chain runs to 206 residues: Guanylyl cyclase inhibitory protein (206 aa).

Gly-2 carries N-myristoyl glycine lipidation. EF-hand domains lie at 31 to 49 (SGLITLHEFRQFFSDVTVG), 51 to 86 (NSSEYAEQIFRALDNNGDGIVDFREYVTAISMLAHG), 87 to 122 (TPEDKLKWSFKLYDKDGDGAITRSEMLEIMRAVYKM), and 135 to 170 (TAEECTNRIFVRLDKDQNAIISLQEFVDGSLGDEWV). Residues Asp-64, Asn-66, Asp-68, Glu-75, Asp-100, Asp-102, Asp-104, and Glu-111 each coordinate Ca(2+).

Retina; inner segments, somata and synaptic terminals of cone receptors.

In terms of biological role, does not stimulate guanylyl cyclase (GC) when free calcium ion concentration is low, but inhibits GC when free calcium ions concentration is elevated. This Lithobates pipiens (Northern leopard frog) protein is Guanylyl cyclase inhibitory protein (GCIP).